The chain runs to 930 residues: APC membrane recruitment protein 1 (930 aa).

Disordered regions lie at residues 1–33, 55–76, 104–133, 161–193, 222–245, and 366–454; these read MEIA…PPSV, FFGG…TKSQ, CSEP…LFSS, TVPG…NQTT, EMDK…RQEG, and EVCY…PRDS. Residues 222 to 242 show a composition bias toward basic and acidic residues; sequence EMDKRRRAEEEGIGEDEKTGR. Composition is skewed to polar residues over residues 377-399 and 413-424; these read DSPS…SSPM and SPQSDRQESVPN. Residues 439-452 show a composition bias toward basic and acidic residues; the sequence is EESRERPHQERLPR.

It belongs to the Amer family.

Its subcellular location is the cytoplasm. The protein resides in the cell membrane. It is found in the nucleus. Regulator of the canonical Wnt signaling pathway. Acts by specifically binding phosphatidylinositol 4,5-bisphosphate (PtdIns(4,5)P2), translocating to the cell membrane and interacting with key regulators of the canonical Wnt signaling pathway, such as components of the beta-catenin destruction complex. Acts both as a positive and negative regulator of the Wnt signaling pathway, depending on the context. This Danio rerio (Zebrafish) protein is APC membrane recruitment protein 1 (amer1).